The chain runs to 84 residues: GTP cyclohydrolase 1 feedback regulatory protein (84 aa).

Belongs to the GFRP family. As to quaternary structure, homopentamer. Forms a complex with GCH1 where a GCH1 homodecamer is sandwiched by two GFRP homopentamers.

It is found in the nucleus. It localises to the nucleus membrane. The protein resides in the cytoplasm. The protein localises to the cytosol. Functionally, mediates tetrahydrobiopterin inhibition of GTP cyclohydrolase 1. This chain is GTP cyclohydrolase 1 feedback regulatory protein (gchfr), found in Xenopus laevis (African clawed frog).